The sequence spans 223 residues: Thylakoid lumenal 15.0 kDa protein 2, chloroplastic (223 aa).

The protein resides in the plastid. It localises to the chloroplast thylakoid lumen. The polypeptide is Thylakoid lumenal 15.0 kDa protein 2, chloroplastic (Arabidopsis thaliana (Mouse-ear cress)).